Reading from the N-terminus, the 480-residue chain is UDP-N-acetylmuramate--L-alanine ligase (480 aa).

129-135 (GTHGKTT) lines the ATP pocket.

This sequence belongs to the MurCDEF family.

The protein localises to the cytoplasm. The catalysed reaction is UDP-N-acetyl-alpha-D-muramate + L-alanine + ATP = UDP-N-acetyl-alpha-D-muramoyl-L-alanine + ADP + phosphate + H(+). Its pathway is cell wall biogenesis; peptidoglycan biosynthesis. Its function is as follows. Cell wall formation. The polypeptide is UDP-N-acetylmuramate--L-alanine ligase (Mannheimia succiniciproducens (strain KCTC 0769BP / MBEL55E)).